Reading from the N-terminus, the 86-residue chain is YcgL domain-containing protein XOO0428 (86 aa).

The 83-residue stretch at 1-83 (MHAYVYKSQR…PKTRVLAGEC (83 aa)) folds into the YcgL domain.

This is YcgL domain-containing protein XOO0428 from Xanthomonas oryzae pv. oryzae (strain MAFF 311018).